The sequence spans 612 residues: MPRILAATAGSFVLKAYFHRWRSLVILALLLAPLLWPLQYFAERYYSEQLAEQNRQTLDLYVANLLGTLRRYEELPQILGGLPVLRQALQQPGDPLLQKIANEALADIRRRTGADVIYLLQPDGTTQVASNWAQADSFVHRNFAFRPYYREAMQGRLARFFGLGTTSIKRGYYFASAVKEGSRIIGVLVVKVDLEHIERLWGNSPEQLLVIDNYGVVILSSREDWRFHASRPLSAAERDEIHANIPYPVQDPKPLRLQQSAWLSQSRTLPETGWTVSIYAPRTLIERPVRSVLLIGGATLLALLLLLTLLTLSRRHYLDRIALEAEAKRQLEERVLERTRELENANAQLQQEVHEREQAQRELMRAQDEVVQAGKLTALGTMSASISHELNQPLAAIRSYADNARVLLDHQRTEDARGNLEQISDLTTRMASIIAHLKAYARGARRAPENVQLQPAIEDALSMVASRRRAMNVELLRDVPDAPLWVQAGETRLRQILGNLLTNALDALAEKAPPRRLWVIASQDQHGVTLTLRDNGPGFSEDALAHAHEPFFTTKTTAKGLGLGLAICDNLLRALGGRLEMGNHLEGGAVVRLHLLPGVPGVAAMPQEETRA.

Transmembrane regions (helical) follow at residues 23 to 43 (SLVI…YFAE) and 292 to 312 (VLLI…LLTL). The stretch at 328–376 (KRQLEERVLERTRELENANAQLQQEVHEREQAQRELMRAQDEVVQAGKL) forms a coiled coil. Positions 385–599 (SISHELNQPL…VVRLHLLPGV (215 aa)) constitute a Histidine kinase domain. His-388 is subject to Phosphohistidine; by autocatalysis.

Autophosphorylated.

The protein localises to the cell inner membrane. The enzyme catalyses ATP + protein L-histidine = ADP + protein N-phospho-L-histidine.. In terms of biological role, member of the two-component regulatory system DctB/DctD, which regulates C4-dicarboxylate transport via regulation of expression of the dctPQM operon and dctA. DctB functions as a membrane-associated protein kinase that phosphorylates DctD in response to environmental signals. The chain is C4-dicarboxylate transport sensor protein DctB from Pseudomonas aeruginosa (strain ATCC 15692 / DSM 22644 / CIP 104116 / JCM 14847 / LMG 12228 / 1C / PRS 101 / PAO1).